The primary structure comprises 329 residues: UPF0158 protein CT_429 (329 aa).

The segment at 292–329 (GYDSDGETGDFFDEEYDDEEEEIKPKKTTKRGRKKSRS) is disordered. The span at 295–313 (SDGETGDFFDEEYDDEEEE) shows a compositional bias: acidic residues. Positions 317-329 (KKTTKRGRKKSRS) are enriched in basic residues.

Belongs to the UPF0158 family.

This Chlamydia trachomatis serovar D (strain ATCC VR-885 / DSM 19411 / UW-3/Cx) protein is UPF0158 protein CT_429.